The following is a 454-amino-acid chain: Serine/arginine (SR)-type shuttling mRNA binding protein HRB1 (454 aa).

The segment at 1 to 141 (MSDQERGSEN…SSGARGDYGP (141 aa)) is disordered. A compositionally biased stretch (basic residues) spans 14–24 (SRSRSRSPVRR). Composition is skewed to basic and acidic residues over residues 25 to 38 (RMSDDHGYERDNHL) and 50 to 113 (KFAD…DYPR). Omega-N-methylarginine is present on Arg127. RRM domains are found at residues 161–237 (NSIF…QDNP) and 261–338 (HEVI…SKES). A phosphoserine mark is found at Ser338, Ser343, and Ser355. The RRM 3 domain maps to 376-453 (RLIYCSNLPF…CDLDISYAKR (78 aa)).

Methylated by HMT1.

The protein localises to the cytoplasm. The protein resides in the nucleus. It localises to the P-body. It is found in the stress granule. Functionally, binds to intron-containing transcripts and is involved in quality control for the export of spliced mRNAs from the nucleus. Binds to pre-mRNAs until splicing is completed or until faulty mRNAs are degraded. On correctly spliced mRNAs, GBP2 and HRB1 recruit MEX67 to allow nuclear export. On faulty mRNAs, GBP2 and HRB1 associate with the TRAMP complex that guides those pre-mRNAs to the exosome for degradation. This chain is Serine/arginine (SR)-type shuttling mRNA binding protein HRB1, found in Saccharomyces cerevisiae (strain ATCC 204508 / S288c) (Baker's yeast).